The chain runs to 455 residues: Argininosuccinate lyase (455 aa).

Belongs to the lyase 1 family. Argininosuccinate lyase subfamily.

It is found in the cytoplasm. It catalyses the reaction 2-(N(omega)-L-arginino)succinate = fumarate + L-arginine. It functions in the pathway amino-acid biosynthesis; L-arginine biosynthesis; L-arginine from L-ornithine and carbamoyl phosphate: step 3/3. The chain is Argininosuccinate lyase from Shewanella denitrificans (strain OS217 / ATCC BAA-1090 / DSM 15013).